An 841-amino-acid chain; its full sequence is Auxin response factor 24 (841 aa).

A disordered region spans residues 109 to 140 (LPEKQQDGNGSGNGNVSKDKVEEEEVVPPAAT). The TF-B3 DNA-binding region spans 148–250 (FCKTLTASDT…ELRVGVRRAM (103 aa)). Disordered regions lie at residues 366–397 (PRPD…KRAR), 663–715 (QDAL…SRSC), and 804–841 (GALN…SENC). The span at 684 to 695 (AQHDSAREKHQS) shows a compositional bias: basic and acidic residues. Polar residues-rich tracts occupy residues 701-713 (KNIQ…GSSR) and 830-841 (GLSTPSLNSENC). The PB1 domain maps to 713-797 (RSCKKVHKQG…HKIFIYTREE (85 aa)).

This sequence belongs to the ARF family. In terms of assembly, homodimers and heterodimers. As to expression, expressed in roots, culms, leaves and young panicles.

It localises to the nucleus. Auxin response factors (ARFs) are transcriptional factors that bind specifically to the DNA sequence 5'-TGTCTC-3' found in the auxin-responsive promoter elements (AuxREs). The protein is Auxin response factor 24 (ARF24) of Oryza sativa subsp. japonica (Rice).